The sequence spans 378 residues: Transmembrane 6 superfamily member 2 (378 aa).

Helical transmembrane passes span 34–54, 63–83, 110–130, 140–160, 170–190, 219–239, 269–289, 291–311, and 332–352; these read LCVV…VYSL, PLYA…VIAL, IFIC…MAGA, LGLY…PGNI, PTFF…MRIF, LTLI…GLVV, MLMY…ALTF, GCSW…QAQF, and TWAT…LLAL. EXPERA domains follow at residues 61-186 and 217-351; these read YDPL…CWAG and ADLT…HLLA.

Belongs to the TM6SF family.

The protein resides in the endoplasmic reticulum membrane. It is found in the endoplasmic reticulum-Golgi intermediate compartment membrane. Regulator of liver fat metabolism influencing triglyceride secretion and hepatic lipid droplet content. May function as sterol isomerase. This Rattus norvegicus (Rat) protein is Transmembrane 6 superfamily member 2 (Tm6sf2).